The sequence spans 53 residues: Large ribosomal subunit protein bL33A (53 aa).

This sequence belongs to the bacterial ribosomal protein bL33 family.

This chain is Large ribosomal subunit protein bL33A (rpmG1), found in Mycoplasma pneumoniae (strain ATCC 29342 / M129 / Subtype 1) (Mycoplasmoides pneumoniae).